The primary structure comprises 109 residues: Gliadoralin-A (109 aa).

A signal peptide spans 1–16 (MLVILLMVVVLALSSA). A Pyrrolidone carboxylic acid modification is found at Q17. A disordered region spans residues 17–109 (QDPNRDFVVS…PRYQQPRRAV (93 aa)). The segment covering 35-109 (PSSQQGTVGG…PRYQQPRRAV (75 aa)) has biased composition (low complexity). Residues 107–109 (RAV) constitute a propeptide that is removed on maturation.

Post-translationally, predominantly proteolytically processed at its C-terminus before secretion to produce the major form gliadoralin A 1-90. Further proteloytically processed after secretion to produce minor forms. Potential substrate of transglutaminase. In terms of tissue distribution, found in saliva (at protein level). Secreted from the submandibular gland.

It localises to the secreted. May play a role in the formation of the protective mucosal protein pellicle involved in the reinforcement and protection of oral mucosal epithelial surface. The polypeptide is Gliadoralin-A (Rattus norvegicus (Rat)).